We begin with the raw amino-acid sequence, 101 residues long: DNA-directed RNA polymerase subunit omega (101 aa).

The span at 1-13 shows a compositional bias: low complexity; that stretch reads MSSTPAAASATPS. The tract at residues 1–22 is disordered; the sequence is MSSTPAAASATPSHGALPAYDT.

Belongs to the RNA polymerase subunit omega family. In terms of assembly, the RNAP catalytic core consists of 2 alpha, 1 beta, 1 beta' and 1 omega subunit. When a sigma factor is associated with the core the holoenzyme is formed, which can initiate transcription.

It carries out the reaction RNA(n) + a ribonucleoside 5'-triphosphate = RNA(n+1) + diphosphate. Functionally, promotes RNA polymerase assembly. Latches the N- and C-terminal regions of the beta' subunit thereby facilitating its interaction with the beta and alpha subunits. The protein is DNA-directed RNA polymerase subunit omega of Rhodococcus jostii (strain RHA1).